A 393-amino-acid polypeptide reads, in one-letter code: Bifunctional enzyme Fae/Hps (393 aa).

Positions 1–161 (MYLIGEALIG…HEKDRAAHAV (161 aa)) are formaldehyde-activating enzyme. His17 functions as the Proton donor in the catalytic mechanism. Substrate contacts are provided by Asp19, Leu48, Lys66, Thr68, and Gln83. The segment at 162–393 (MGFKVPRLWD…IDQFRIMTDF (232 aa)) is 3-hexulose-6-phosphate synthase.

This sequence in the N-terminal section; belongs to the formaldehyde-activating enzyme family. In the C-terminal section; belongs to the HPS/KGPDC family. HPS subfamily.

The catalysed reaction is 5,6,7,8-tetrahydromethanopterin + formaldehyde = 5,10-methylenetetrahydromethanopterin + H2O. It catalyses the reaction D-ribulose 5-phosphate + formaldehyde = D-arabino-hex-3-ulose 6-phosphate. It functions in the pathway carbohydrate biosynthesis; D-ribose 5-phosphate biosynthesis. Functionally, catalyzes the condensation of formaldehyde with tetrahydromethanopterin (H(4)MPT) to 5,10-methylenetetrahydromethanopterin. In terms of biological role, catalyzes the reversible formation of ribulose-5-phosphate and formaldehyde from 3-hexulose-6-phosphate. The sequence is that of Bifunctional enzyme Fae/Hps from Methanospirillum hungatei JF-1 (strain ATCC 27890 / DSM 864 / NBRC 100397 / JF-1).